Reading from the N-terminus, the 300-residue chain is 4-hydroxy-tetrahydrodipicolinate synthase (300 aa).

T49 is a pyruvate binding site. Y137 (proton donor/acceptor) is an active-site residue. K165 (schiff-base intermediate with substrate) is an active-site residue. Residue I207 participates in pyruvate binding.

This sequence belongs to the DapA family. In terms of assembly, homotetramer; dimer of dimers.

The protein localises to the cytoplasm. It catalyses the reaction L-aspartate 4-semialdehyde + pyruvate = (2S,4S)-4-hydroxy-2,3,4,5-tetrahydrodipicolinate + H2O + H(+). It functions in the pathway amino-acid biosynthesis; L-lysine biosynthesis via DAP pathway; (S)-tetrahydrodipicolinate from L-aspartate: step 3/4. Catalyzes the condensation of (S)-aspartate-beta-semialdehyde [(S)-ASA] and pyruvate to 4-hydroxy-tetrahydrodipicolinate (HTPA). In Nitrosospira multiformis (strain ATCC 25196 / NCIMB 11849 / C 71), this protein is 4-hydroxy-tetrahydrodipicolinate synthase.